A 70-amino-acid polypeptide reads, in one-letter code: Small ribosomal subunit protein bS21 (70 aa).

The protein belongs to the bacterial ribosomal protein bS21 family.

The chain is Small ribosomal subunit protein bS21 from Cupriavidus pinatubonensis (strain JMP 134 / LMG 1197) (Cupriavidus necator (strain JMP 134)).